Reading from the N-terminus, the 129-residue chain is Glycine cleavage system H protein (129 aa).

One can recognise a Lipoyl-binding domain in the interval 24–106 (IAVIGISAYA…YEQGWLLKVQ (83 aa)). The residue at position 65 (Lys65) is an N6-lipoyllysine.

It belongs to the GcvH family. As to quaternary structure, the glycine cleavage system is composed of four proteins: P, T, L and H. (R)-lipoate serves as cofactor.

Its function is as follows. The glycine cleavage system catalyzes the degradation of glycine. The H protein shuttles the methylamine group of glycine from the P protein to the T protein. The sequence is that of Glycine cleavage system H protein from Synechococcus elongatus (strain ATCC 33912 / PCC 7942 / FACHB-805) (Anacystis nidulans R2).